A 595-amino-acid polypeptide reads, in one-letter code: Proline--tRNA ligase (595 aa).

The tract at residues 1 to 22 is disordered; that stretch reads MKMSTMFGATLHTAPGRSESEG.

It belongs to the class-II aminoacyl-tRNA synthetase family. ProS type 1 subfamily. In terms of assembly, homodimer.

The protein localises to the cytoplasm. It carries out the reaction tRNA(Pro) + L-proline + ATP = L-prolyl-tRNA(Pro) + AMP + diphosphate. Catalyzes the attachment of proline to tRNA(Pro) in a two-step reaction: proline is first activated by ATP to form Pro-AMP and then transferred to the acceptor end of tRNA(Pro). As ProRS can inadvertently accommodate and process non-cognate amino acids such as alanine and cysteine, to avoid such errors it has two additional distinct editing activities against alanine. One activity is designated as 'pretransfer' editing and involves the tRNA(Pro)-independent hydrolysis of activated Ala-AMP. The other activity is designated 'posttransfer' editing and involves deacylation of mischarged Ala-tRNA(Pro). The misacylated Cys-tRNA(Pro) is not edited by ProRS. The polypeptide is Proline--tRNA ligase (Salinispora tropica (strain ATCC BAA-916 / DSM 44818 / JCM 13857 / NBRC 105044 / CNB-440)).